A 93-amino-acid polypeptide reads, in one-letter code: Acylphosphatase (93 aa).

The region spanning 6–93 is the Acylphosphatase-like domain; that stretch reads RARIVVSGRV…GDLGAFEIRF (88 aa). Catalysis depends on residues Arg21 and Asn39.

The protein belongs to the acylphosphatase family.

It catalyses the reaction an acyl phosphate + H2O = a carboxylate + phosphate + H(+). In Anaeromyxobacter dehalogenans (strain 2CP-C), this protein is Acylphosphatase (acyP).